Consider the following 498-residue polypeptide: Ribosomal RNA small subunit methyltransferase G 2 (498 aa).

Residues 1–230 are methyltransferase G; that stretch reads MRNGTIRYPG…FQRLGPPTRI (230 aa). S-adenosyl-L-methionine contacts are provided by glycine 89, methionine 94, and arginine 154. A methyltransferase TrmH family region spans residues 231 to 498; the sequence is RKETAMKRHG…SQTKHSPAPA (268 aa).

It in the N-terminal section; belongs to the methyltransferase superfamily. RNA methyltransferase RsmG family. The protein in the C-terminal section; belongs to the class IV-like SAM-binding methyltransferase superfamily. RNA methyltransferase TrmH family.

The protein localises to the cytoplasm. It catalyses the reaction guanosine(527) in 16S rRNA + S-adenosyl-L-methionine = N(7)-methylguanosine(527) in 16S rRNA + S-adenosyl-L-homocysteine. Its function is as follows. Specifically methylates the N7 position of guanine in position 527 of 16S rRNA. The chain is Ribosomal RNA small subunit methyltransferase G 2 (rsmG2) from Syntrophobacter fumaroxidans (strain DSM 10017 / MPOB).